The following is a 74-amino-acid chain: Translational regulator CsrA (74 aa).

Belongs to the CsrA/RsmA family. As to quaternary structure, homodimer; the beta-strands of each monomer intercalate to form a hydrophobic core, while the alpha-helices form wings that extend away from the core.

The protein resides in the cytoplasm. Its function is as follows. A translational regulator that binds mRNA to regulate translation initiation and/or mRNA stability. Usually binds in the 5'-UTR at or near the Shine-Dalgarno sequence preventing ribosome-binding, thus repressing translation. Its main target seems to be the major flagellin gene, while its function is anatagonized by FliW. This chain is Translational regulator CsrA, found in Bacillus velezensis (strain DSM 23117 / BGSC 10A6 / LMG 26770 / FZB42) (Bacillus amyloliquefaciens subsp. plantarum).